A 150-amino-acid polypeptide reads, in one-letter code: General odorant-binding protein 19d (150 aa).

A signal peptide spans Met1 to Ala23. 3 cysteine pairs are disulfide-bonded: Cys41–Cys72, Cys68–Cys126, and Cys116–Cys135.

The protein belongs to the PBP/GOBP family. As to expression, expressed in the antenna, mostly on the anterior surface of the third antennal segment. Also detected in the maxillary palps and in cells at the bases of the taste hairs on the proboscis and internal taste organs of the head.

The protein localises to the secreted. The polypeptide is General odorant-binding protein 19d (Obp19d) (Drosophila melanogaster (Fruit fly)).